The chain runs to 430 residues: 3-phosphoshikimate 1-carboxyvinyltransferase (430 aa).

Positions 1–20 are disordered; sequence MHATVSPSRVRGRARAPPSK. 3-phosphoshikimate is bound by residues Lys20, Ser21, and Arg25. Residue Lys20 participates in phosphoenolpyruvate binding. The phosphoenolpyruvate site is built by Gly91 and Arg119. 3-phosphoshikimate is bound by residues Ser164, Ser165, Gln166, Ser192, Asp312, and Lys339. Residue Gln166 coordinates phosphoenolpyruvate. Residue Asp312 is the Proton acceptor of the active site. 2 residues coordinate phosphoenolpyruvate: Arg343 and Arg386.

This sequence belongs to the EPSP synthase family. Monomer.

It localises to the cytoplasm. It carries out the reaction 3-phosphoshikimate + phosphoenolpyruvate = 5-O-(1-carboxyvinyl)-3-phosphoshikimate + phosphate. It functions in the pathway metabolic intermediate biosynthesis; chorismate biosynthesis. Its function is as follows. Catalyzes the transfer of the enolpyruvyl moiety of phosphoenolpyruvate (PEP) to the 5-hydroxyl of shikimate-3-phosphate (S3P) to produce enolpyruvyl shikimate-3-phosphate and inorganic phosphate. This Halobacterium salinarum (strain ATCC 29341 / DSM 671 / R1) protein is 3-phosphoshikimate 1-carboxyvinyltransferase.